Here is a 404-residue protein sequence, read N- to C-terminus: Pyrophosphate--fructose 6-phosphate 1-phosphotransferase (404 aa).

A diphosphate-binding site is contributed by Gly-13. Asn-108 provides a ligand contact to Mg(2+). Substrate is bound by residues 136–138 (TID), 180–182 (MGR), Glu-237, and 295–298 (YLQR). Asp-138 acts as the Proton acceptor in catalysis.

This sequence belongs to the phosphofructokinase type A (PFKA) family. PPi-dependent PFK group II subfamily. Clade 'B2' sub-subfamily. In terms of assembly, homodimer. It depends on Mg(2+) as a cofactor.

It localises to the cytoplasm. It catalyses the reaction beta-D-fructose 6-phosphate + diphosphate = beta-D-fructose 1,6-bisphosphate + phosphate + H(+). It functions in the pathway carbohydrate degradation; glycolysis; D-glyceraldehyde 3-phosphate and glycerone phosphate from D-glucose: step 3/4. Its activity is regulated as follows. Non-allosteric. Catalyzes the phosphorylation of D-fructose 6-phosphate, the first committing step of glycolysis. Uses inorganic phosphate (PPi) as phosphoryl donor instead of ATP like common ATP-dependent phosphofructokinases (ATP-PFKs), which renders the reaction reversible, and can thus function both in glycolysis and gluconeogenesis. Consistently, PPi-PFK can replace the enzymes of both the forward (ATP-PFK) and reverse (fructose-bisphosphatase (FBPase)) reactions. The chain is Pyrophosphate--fructose 6-phosphate 1-phosphotransferase from Rhodospirillum rubrum (strain ATCC 11170 / ATH 1.1.1 / DSM 467 / LMG 4362 / NCIMB 8255 / S1).